The following is a 28-amino-acid chain: APAPSGGGSAPLAKIYPRGSHWAVGHLM.

At Met-28 the chain carries Methionine amide.

It belongs to the bombesin/neuromedin-B/ranatensin family.

It localises to the secreted. The protein resides in the cytoplasmic vesicle. The protein localises to the secretory vesicle lumen. Its function is as follows. Stimulates the release of gastrin and other gastrointestinal hormones. The sequence is that of Gastrin-releasing peptide (GRP) from Alligator mississippiensis (American alligator).